The following is a 512-amino-acid chain: 2,3-bisphosphoglycerate-independent phosphoglycerate mutase (512 aa).

Asp-12 and Ser-62 together coordinate Mn(2+). Ser-62 acts as the Phosphoserine intermediate in catalysis. Residues His-123, 154-155 (RD), Arg-181, Arg-187, 253-256 (RPDR), and Lys-336 contribute to the substrate site. Mn(2+) is bound by residues Asp-403, His-407, Asp-444, His-445, and His-462.

The protein belongs to the BPG-independent phosphoglycerate mutase family. Monomer. It depends on Mn(2+) as a cofactor.

It catalyses the reaction (2R)-2-phosphoglycerate = (2R)-3-phosphoglycerate. It functions in the pathway carbohydrate degradation; glycolysis; pyruvate from D-glyceraldehyde 3-phosphate: step 3/5. Functionally, catalyzes the interconversion of 2-phosphoglycerate and 3-phosphoglycerate. This chain is 2,3-bisphosphoglycerate-independent phosphoglycerate mutase, found in Aster yellows witches'-broom phytoplasma (strain AYWB).